We begin with the raw amino-acid sequence, 341 residues long: Transcription factor VIP1 (341 aa).

Disordered stretches follow at residues 1–33 (MEGGGRGPNQTILSEIEHMPEAPRQRISHHRRA), 59–106 (SLDF…PEAR), and 135–156 (SSGEKKKGNHHHSRSNSMDGEM). The segment at 1-162 (MEGGGRGPNQ…DGEMSSASFN (162 aa)) is necessary and sufficient for transient T-DNA transformation end expression. Basic and acidic residues predominate over residues 15 to 24 (EIEHMPEAPR). A compositionally biased stretch (low complexity) spans 71–80 (QSQQQPQASP). Ser79 bears the Phosphoserine mark. An involved in homomultimerization and histone H2A binding region spans residues 163–341 (IESILASVSG…PSYMDFTKRG (179 aa)). Residues 194 to 257 (DPKRAKRILA…SELNTENKHL (64 aa)) enclose the bZIP domain. The basic motif stretch occupies residues 196–217 (KRAKRILANRQSAARSKERKIR). Residues 198-205 (AKRILANR) carry the Nuclear localization signal motif. The leucine-zipper stretch occupies residues 222-257 (LERKVQTLQNEATTLSAQVTMLQRGTSELNTENKHL). A compositionally biased stretch (polar residues) spans 307 to 331 (SQQSAMNQFGNKTNQQMSTNGQPSL). Positions 307 to 341 (SQQSAMNQFGNKTNQQMSTNGQPSLPSYMDFTKRG) are disordered.

This sequence belongs to the bZIP family. Forms homomultimers. Interacts with Agrobacterium tumefaciens VirE2 and mediates its translocation to the host nucleus. Binds to VIP2. Forms a complex made of Agrobacterium VirE2, VIP1, VIP2 and single-stranded DNA (ssDNA). The interaction with KAP1 mediates its nuclear import. Binds to the H2A histone RAT5. Interacts with MPK3 and Agrobacterium virF. Forms a complex made of VIP1, VBF and Agrobacterium virE2. Interacts with SCF(VBF) E3 ubiquitin ligase complex. Binds directly to VBF. Forms heterodimers with BZIP34 and BZIP61. In terms of processing, phosphorylated by MPK3. This phosphorylation promotes nuclear localization. Mostly expressed in dividing cells, present in leaves, roots and seedlings.

The protein localises to the cytoplasm. It localises to the nucleus. Functionally, transcription activator that binds specifically to the VIP1 response elements (VREs) DNA sequence 5'-ACNGCT-3' found in some stress genes (e.g. TRX8 and MYB44), when phosphorylated/activated by MPK3. Required for Agrobacterium VirE2 nuclear import and tumorigenicity. Promotes transient expression of T-DNA in early stages by interacting with VirE2 in complex with the T-DNA and facilitating its translocation to the nucleus, and mediates stable genetic transformation by Agrobacterium by binding H2A histone. Prevents cell differentiation and shoot formation. Limits sulfate utilization efficiency (SUE) and sulfate uptake, especially in low-sulfur conditions. Plays a role in osmosensory response by binding to the 5'-AGCTGT/G-3' DNA sequence found in the promoters of the hypoosmolarity-responsive genes CYP707A1 and CYP707A3. Involved in the negative regulation of touch-induced root bending and salt-dependent root bending. In Arabidopsis thaliana (Mouse-ear cress), this protein is Transcription factor VIP1.